The following is a 345-amino-acid chain: Sorting nexin-15 (345 aa).

Residues Met1–Arg130 enclose the PX domain. An Omega-N-methylarginine modification is found at Arg105. The disordered stretch occupies residues Glu133–Leu163. Over residues Leu141–Pro151 the composition is skewed to pro residues. 2 positions are modified to phosphoserine: Ser208 and Ser234. Residues Ser226–Ala274 form a disordered region. The region spanning Ala272–Ser345 is the MIT domain.

This sequence belongs to the sorting nexin family.

Its function is as follows. May be involved in several stages of intracellular trafficking. Overexpression of SNX15 disrupts the normal trafficking of proteins from the plasma membrane to recycling endosomes or the TGN. The protein is Sorting nexin-15 (SNX15) of Bos taurus (Bovine).